The chain runs to 517 residues: DNA-binding protein (517 aa).

Positions 1–10 (MASRGGNQSS) are enriched in polar residues. A disordered region spans residues 1 to 110 (MASRGGNQSS…DISQDSEEER (110 aa)). A compositionally biased stretch (low complexity) spans 64–80 (VLVSETSRSSLSPERSN). Residues 87–96 (PKKKPRKTKH) are compositionally biased toward basic residues. Tyrosine 180 bears the Phosphotyrosine; by host mark. Positions 269 and 271 each coordinate Zn(2+). Positions 282–316 (IEMDVASENGQRAMKENPDRAKITQNRWGRNVVQL) are flexible loop. Positions 324, 340, 382, 384, 436, and 453 each coordinate Zn(2+). The tract at residues 501–517 (VSLPAGHYDSRQNPFDF) is C-terminal arm, DBP binding.

The protein belongs to the adenoviridae E2A DNA-binding protein family. As to quaternary structure, homomultimerizes on viral ssDNA bound to pTP. Forms a initiation complex with viral polymerase, pTP and hosts NFIA and POU2F1/OCT1. Interacts with host SRCAP.

The protein localises to the host nucleus. Plays a role in the elongation phase of viral strand displacement replication by unwinding the template in an ATP-independent fashion, employing its capacity to form multimers. Also enhances the rate of initiation. Released from template upon second strand synthesis. Assembles in complex with viral pTP, viral pol, host NFIA and host POU2F1/OCT1 on viral origin of replication. Covers the whole ssDNA genome during synthesis. The complementary strand synthesis induces its relese from DNA template. May inhibit cellular transcription mediated by the interaction between host SRCAP and CBP. The chain is DNA-binding protein from Human adenovirus B serotype 7 (HAdV-7).